Here is a 251-residue protein sequence, read N- to C-terminus: Flagellar L-ring protein (251 aa).

A signal peptide spans 1–17; sequence MIRKLAALIVAAAALQA. Residue C18 is the site of N-palmitoyl cysteine attachment. C18 is lipidated: S-diacylglycerol cysteine.

This sequence belongs to the FlgH family. The basal body constitutes a major portion of the flagellar organelle and consists of four rings (L,P,S, and M) mounted on a central rod.

It is found in the cell outer membrane. The protein resides in the bacterial flagellum basal body. Assembles around the rod to form the L-ring and probably protects the motor/basal body from shearing forces during rotation. The chain is Flagellar L-ring protein from Maricaulis maris (strain MCS10) (Caulobacter maris).